The following is a 351-amino-acid chain: Thiamine-phosphate synthase (351 aa).

A unknown region spans residues 1-128 (MKNPNIIQPE…SKIASEIRYE (128 aa)). The thiamine-phosphate synthase stretch occupies residues 129 to 351 (IYTLEIEILN…IIIKELSHEN (223 aa)). Residues 180–184 (QHRFK) and Asn212 contribute to the 4-amino-2-methyl-5-(diphosphooxymethyl)pyrimidine site. Mg(2+) is bound by residues Asn213 and Asp232. Ser251 is a binding site for 4-amino-2-methyl-5-(diphosphooxymethyl)pyrimidine. 2-[(2R,5Z)-2-carboxy-4-methylthiazol-5(2H)-ylidene]ethyl phosphate is bound at residue 277 to 279 (TLT). Residue Lys280 coordinates 4-amino-2-methyl-5-(diphosphooxymethyl)pyrimidine. 2-[(2R,5Z)-2-carboxy-4-methylthiazol-5(2H)-ylidene]ethyl phosphate contacts are provided by residues Gly307 and 327–328 (VS).

It belongs to the thiamine-phosphate synthase family.

It catalyses the reaction 2-[(2R,5Z)-2-carboxy-4-methylthiazol-5(2H)-ylidene]ethyl phosphate + 4-amino-2-methyl-5-(diphosphooxymethyl)pyrimidine + 2 H(+) = thiamine phosphate + CO2 + diphosphate. The catalysed reaction is 2-(2-carboxy-4-methylthiazol-5-yl)ethyl phosphate + 4-amino-2-methyl-5-(diphosphooxymethyl)pyrimidine + 2 H(+) = thiamine phosphate + CO2 + diphosphate. It carries out the reaction 4-methyl-5-(2-phosphooxyethyl)-thiazole + 4-amino-2-methyl-5-(diphosphooxymethyl)pyrimidine + H(+) = thiamine phosphate + diphosphate. The protein operates within cofactor biosynthesis; thiamine diphosphate biosynthesis; thiamine phosphate from 4-amino-2-methyl-5-diphosphomethylpyrimidine and 4-methyl-5-(2-phosphoethyl)-thiazole: step 1/1. Its function is as follows. Condenses 4-methyl-5-(beta-hydroxyethyl)thiazole monophosphate (THZ-P) and 2-methyl-4-amino-5-hydroxymethyl pyrimidine pyrophosphate (HMP-PP) to form thiamine monophosphate (TMP). The chain is Thiamine-phosphate synthase from Prochlorococcus marinus subsp. pastoris (strain CCMP1986 / NIES-2087 / MED4).